Consider the following 282-residue polypeptide: TPR repeat protein oca3 (282 aa).

4 TPR repeats span residues 16–50 (IVALFSQQEAYAKLGKYKDEIWDVYQKVFIAALTT), 71–104 (PRVEGLYGMFLEATASEKDAMSYYNSKLSEDPTH), 139–172 (LEAWAELADIYVSVEAFESAIFCYEEMVLLQPFE), and 174–211 (RLFARLGDLYFVLAQSNATNYWFSLKHYCRSVEICEEY).

The protein resides in the cytoplasm. It is found in the nucleus. In terms of biological role, may be involved in cell cycle regulation. This chain is TPR repeat protein oca3 (oca3), found in Schizosaccharomyces pombe (strain 972 / ATCC 24843) (Fission yeast).